Here is a 154-residue protein sequence, read N- to C-terminus: AP-1 complex subunit sigma-2 (154 aa).

The protein belongs to the adaptor complexes small subunit family. In terms of assembly, adaptor protein complex 1 (AP-1) is a heterotetramer composed of two large adaptins (gamma-type subunit and beta-type subunit), a medium adaptin (mu-type subunit) and a small adaptin (sigma-type subunit).

It is found in the golgi apparatus. Its subcellular location is the trans-Golgi network. It localises to the cytoplasmic vesicle. The protein localises to the clathrin-coated vesicle membrane. Functionally, subunit of clathrin-associated adaptor protein complex 1 that plays a role in protein sorting in the trans-Golgi network (TGN) and endosomes. The AP complexes mediate the recruitment of clathrin to membranes and the recognition of sorting signals within the cytosolic tails of transmembrane cargo molecules. Also involved in early steps of phagocytosis and macropinocytosis. This Dictyostelium discoideum (Social amoeba) protein is AP-1 complex subunit sigma-2 (ap1s2).